The chain runs to 496 residues: Probable CtpA-like serine protease (496 aa).

The span at 1–16 (MDDKQHTSSSDDERAE) shows a compositional bias: basic and acidic residues. A disordered region spans residues 1 to 27 (MDDKQHTSSSDDERAEIATSNQDQETN). Residues 18–27 (ATSNQDQETN) are compositionally biased toward polar residues. A helical transmembrane segment spans residues 39–59 (FISILIGTILITAVITVVAYI). The region spanning 124 to 206 (TKSFNEGVSG…TEVTLTVQRG (83 aa)) is the PDZ domain. Residues Ser329, Asp340, and Lys354 each act as charge relay system in the active site.

It belongs to the peptidase S41A family.

It localises to the cell membrane. The protein is Probable CtpA-like serine protease of Staphylococcus aureus (strain COL).